The following is a 150-amino-acid chain: Transcriptional repressor NrdR (150 aa).

Residues 3-34 fold into a zinc finger; that stretch reads CPFCAFADSKVVDSRPDKGGSTIRRRRECESC. Positions 49–139 constitute an ATP-cone domain; the sequence is PLVIKKDGRR…VYRSFKDITE (91 aa).

The protein belongs to the NrdR family. The cofactor is Zn(2+).

Its function is as follows. Negatively regulates transcription of bacterial ribonucleotide reductase nrd genes and operons by binding to NrdR-boxes. This Geotalea uraniireducens (strain Rf4) (Geobacter uraniireducens) protein is Transcriptional repressor NrdR.